The following is a 686-amino-acid chain: Endonuclease GajA (686 aa).

Residues 1–423 form an ATPase domain region; that stretch reads MYLKSLKIYN…NYVTTKNNYT (423 aa). 52-56 provides a ligand contact to ATP; sequence NCGKT. Residues 463 to 599 are toprim domain; sequence FFSDAIIFVE…TSFEEAFILT (137 aa). The a divalent metal cation site is built by Glu472, Glu476, Asp559, and Glu604.

As to quaternary structure, homotetramer. Forms the core of the anti-phage defense complex. Interacts with GajB; 2 GajB dimers dock at opposite sides of the GajA complex to form a 4:4 GajA-GajB assembly (GajAB). GajAB interacts with Bacillus phage Phi3T Gad1 protein; this interaction forms a 4:4:8 GajAB-Gad1 complex and leads to GajAB inhibition. Mg(2+) serves as cofactor.

Functionally, component of antiviral defense system Gabija type II, composed of GajA and GajB. Probably a nicking endonuclease that is strongly inhibited by physiological levels of nucleotides (NTP and dNTP). Expression of Gabija type II in B.subtilis (strain BEST7003) confers resistance to phages phi105, and SpBeta. During viral replication, when nucleotides are rapidly consumed, it is de-suppressed and degrades target DNA. The chain is Endonuclease GajA from Bacillus cereus (strain HuB5-5).